The sequence spans 282 residues: MEMO1 family protein Msm_1438 (282 aa).

Belongs to the MEMO1 family.

The protein is MEMO1 family protein Msm_1438 of Methanobrevibacter smithii (strain ATCC 35061 / DSM 861 / OCM 144 / PS).